Consider the following 860-residue polypeptide: MTEYTPMIKQYLEIKDKYQDAFLFFRLGDFYEMFFEDALNASQILEITLTGREGGTKEKIPMCGVPYHSASGYIDTLIEKGYKVAICEQVEDPKTTKGMVKREVVQLISPGTVMDERGLKAKENNYIASLYCYEGKEYGFAYSDLSTGELKSTVIEASEDRLINELTTLSTRELIVSASEKEVLSDVMKEQLGLTFSVHEEDTIPLENEKLVTRHMSLSEKRAIGKLLHYLKETQKRDLGHLQQAVHYETSNYMKMDYYSKRNLELAESIRGKGRQGTLLWLLDNTQTAMGGRMLKQWIDRPLIDRNKIIERQNDVSELMANFFERLELVENLKNVYDLERLAGRVAYGNVNARDLIQLRNSLYQIPRIRATLLSMNSKSLTELANQLDPCEELTEKLEEAIMDSAPISIREGGIIKDGYNSQLDTYRDASRNGKTWIAELERKERELTGIKTMKVGFNRVFGYYIEVTRANTHLLPEGRYERKQTLTNAERYITPELKEKEKLILDAEEKSMELEYQLFTEVRELVKDYIERLQKLAKSVSEIDCLQSFADISEKNHFIRPTLSEDGSLHVKQGRHPVVEKVMGAQSYVANDCDLDRNREILLITGPNMSGKSTYMRQVALTAICAQVGCFVPAEEATLPIFDQIFTRIGAADDLIAGQSTFMVEMLEARNAIVHATKDSLILFDEIGRGTATYDGMALAQAIIEYIHENVHAKTLFSTHYHELTDLEKELHGLQNIHVSAVEENGKVVFLHKIKEGPADKSYGIHVAELAELPKSLIERASRILEQLENDDKKIVITNDKQPEEIHEEVQLSMFPVEPEKKASSKETKLLKEIASMNIMQMTPMDAMNKLYELQSKIH.

607–614 (GPNMSGKS) is an ATP binding site.

It belongs to the DNA mismatch repair MutS family.

This protein is involved in the repair of mismatches in DNA. It is possible that it carries out the mismatch recognition step. This protein has a weak ATPase activity. The protein is DNA mismatch repair protein MutS of Listeria monocytogenes serotype 4a (strain HCC23).